Here is a 160-residue protein sequence, read N- to C-terminus: 2-C-methyl-D-erythritol 2,4-cyclodiphosphate synthase (160 aa).

Residues Asp9 and His11 each coordinate a divalent metal cation. 4-CDP-2-C-methyl-D-erythritol 2-phosphate-binding positions include Asp9–His11 and His35–Ser36. His43 is a binding site for a divalent metal cation. 4-CDP-2-C-methyl-D-erythritol 2-phosphate contacts are provided by residues Asp57 to Gly59, Phe62 to Asp66, and Phe140.

Belongs to the IspF family. Homotrimer. A divalent metal cation is required as a cofactor.

The catalysed reaction is 4-CDP-2-C-methyl-D-erythritol 2-phosphate = 2-C-methyl-D-erythritol 2,4-cyclic diphosphate + CMP. The protein operates within isoprenoid biosynthesis; isopentenyl diphosphate biosynthesis via DXP pathway; isopentenyl diphosphate from 1-deoxy-D-xylulose 5-phosphate: step 4/6. Its function is as follows. Involved in the biosynthesis of isopentenyl diphosphate (IPP) and dimethylallyl diphosphate (DMAPP), two major building blocks of isoprenoid compounds. Catalyzes the conversion of 4-diphosphocytidyl-2-C-methyl-D-erythritol 2-phosphate (CDP-ME2P) to 2-C-methyl-D-erythritol 2,4-cyclodiphosphate (ME-CPP) with a corresponding release of cytidine 5-monophosphate (CMP). This is 2-C-methyl-D-erythritol 2,4-cyclodiphosphate synthase from Fusobacterium nucleatum subsp. nucleatum (strain ATCC 25586 / DSM 15643 / BCRC 10681 / CIP 101130 / JCM 8532 / KCTC 2640 / LMG 13131 / VPI 4355).